The sequence spans 261 residues: Small ribosomal subunit protein uS2 (261 aa).

A disordered region spans residues 223–261 (EGKQGQDDSEDVEKEMADKAAAEDDEEESIEVVVEKSED).

Belongs to the universal ribosomal protein uS2 family.

The chain is Small ribosomal subunit protein uS2 from Lactobacillus johnsonii (strain CNCM I-12250 / La1 / NCC 533).